Consider the following 349-residue polypeptide: tRNA pseudouridine synthase D (349 aa).

Phenylalanine 27 serves as a coordination point for substrate. Residue aspartate 80 is the Nucleophile of the active site. Asparagine 129 is a substrate binding site. The TRUD domain maps to 155–303 (GVPNYFGAQR…VEAARRAMLL (149 aa)). Residue phenylalanine 329 coordinates substrate.

The protein belongs to the pseudouridine synthase TruD family.

It carries out the reaction uridine(13) in tRNA = pseudouridine(13) in tRNA. Its function is as follows. Responsible for synthesis of pseudouridine from uracil-13 in transfer RNAs. The protein is tRNA pseudouridine synthase D of Escherichia coli (strain SE11).